A 229-amino-acid chain; its full sequence is Heptaprenylglyceryl phosphate synthase (229 aa).

K12 contributes to the sn-glycerol 1-phosphate binding site. Positions 14 and 40 each coordinate Mg(2+). Sn-glycerol 1-phosphate-binding positions include 159 to 164 (YLEYSG), G189, and 209 to 210 (GN).

It belongs to the GGGP/HepGP synthase family. Group I subfamily. In terms of assembly, homodimer. The cofactor is Mg(2+).

The enzyme catalyses sn-glycerol 1-phosphate + all-trans-heptaprenyl diphosphate = 3-heptaprenyl-sn-glycero-1-phosphate + diphosphate. It participates in membrane lipid metabolism; glycerophospholipid metabolism. Prenyltransferase that catalyzes in vivo the transfer of the heptaprenyl moiety of heptaprenyl pyrophosphate (HepPP; 35 carbon atoms) to the C3 hydroxyl of sn-glycerol-1-phosphate (G1P), producing heptaprenylglyceryl phosphate (HepGP). This reaction is an ether-bond-formation step in the biosynthesis of archaea-type G1P-based membrane lipids found in Bacillales. The polypeptide is Heptaprenylglyceryl phosphate synthase (Bacillus cytotoxicus (strain DSM 22905 / CIP 110041 / 391-98 / NVH 391-98)).